The primary structure comprises 345 residues: Photosystem II protein D1 (345 aa).

3 helical membrane-spanning segments follow: residues tyrosine 30 to threonine 47, histidine 119 to leucine 134, and tryptophan 143 to alanine 157. Residue histidine 119 participates in chlorophyll a binding. Tyrosine 127 serves as a coordination point for pheophytin a. [CaMn4O5] cluster contacts are provided by aspartate 171 and glutamate 190. The chain crosses the membrane as a helical span at residues phenylalanine 198–leucine 219. Histidine 199 is a chlorophyll a binding site. Residues histidine 216 and serine 265 to phenylalanine 266 each bind a quinone. Histidine 216 contributes to the Fe cation binding site. Histidine 273 provides a ligand contact to Fe cation. A helical transmembrane segment spans residues phenylalanine 275–leucine 289. The [CaMn4O5] cluster site is built by histidine 333, glutamate 334, aspartate 343, and alanine 345.

The protein belongs to the reaction center PufL/M/PsbA/D family. PSII is composed of 1 copy each of membrane proteins PsbA, PsbB, PsbC, PsbD, PsbE, PsbF, PsbH, PsbI, PsbJ, PsbK, PsbL, PsbM, PsbT, PsbY, PsbZ, Psb30/Ycf12, at least 3 peripheral proteins of the oxygen-evolving complex and a large number of cofactors. It forms dimeric complexes. The D1/D2 heterodimer binds P680, chlorophylls that are the primary electron donor of PSII, and subsequent electron acceptors. It shares a non-heme iron and each subunit binds pheophytin, quinone, additional chlorophylls, carotenoids and lipids. D1 provides most of the ligands for the Mn4-Ca-O5 cluster of the oxygen-evolving complex (OEC). There is also a Cl(-1) ion associated with D1 and D2, which is required for oxygen evolution. The PSII complex binds additional chlorophylls, carotenoids and specific lipids. is required as a cofactor. Post-translationally, tyr-162 forms a radical intermediate that is referred to as redox-active TyrZ, YZ or Y-Z.

It localises to the plastid. The protein localises to the chloroplast thylakoid membrane. The enzyme catalyses 2 a plastoquinone + 4 hnu + 2 H2O = 2 a plastoquinol + O2. Its function is as follows. Photosystem II (PSII) is a light-driven water:plastoquinone oxidoreductase that uses light energy to abstract electrons from H(2)O, generating O(2) and a proton gradient subsequently used for ATP formation. It consists of a core antenna complex that captures photons, and an electron transfer chain that converts photonic excitation into a charge separation. The D1/D2 (PsbA/PsbD) reaction center heterodimer binds P680, the primary electron donor of PSII as well as several subsequent electron acceptors. The sequence is that of Photosystem II protein D1 from Euglena gracilis.